The following is a 259-amino-acid chain: Ubiquinone biosynthesis protein COQ4 homolog, mitochondrial (259 aa).

Zn(2+)-binding residues include histidine 162, aspartate 163, histidine 166, and glutamate 178.

This sequence belongs to the COQ4 family. In terms of assembly, component of a multi-subunit COQ enzyme complex. It depends on Zn(2+) as a cofactor.

The protein resides in the mitochondrion inner membrane. The catalysed reaction is a 4-hydroxy-3-methoxy-5-(all-trans-polyprenyl)benzoate + H(+) = a 2-methoxy-6-(all-trans-polyprenyl)phenol + CO2. The protein operates within cofactor biosynthesis; ubiquinone biosynthesis. Its function is as follows. Lyase that catalyzes the C1-decarboxylation of 4-hydroxy-3-methoxy-5-(all-trans-polyprenyl)benzoic acid into 2-methoxy-6-(all-trans-polyprenyl)phenol during ubiquinone biosynthesis. This Bombyx mori (Silk moth) protein is Ubiquinone biosynthesis protein COQ4 homolog, mitochondrial.